Consider the following 485-residue polypeptide: Glutamate--tRNA ligase (485 aa).

A 'HIGH' region motif is present at residues 12–22; sequence PSPTGYMHIGN. Residues 253-257 carry the 'KMSKS' region motif; that stretch reads KLSKR. Residue Lys256 coordinates ATP.

The protein belongs to the class-I aminoacyl-tRNA synthetase family. Glutamate--tRNA ligase type 1 subfamily. As to quaternary structure, monomer.

The protein localises to the cytoplasm. It catalyses the reaction tRNA(Glu) + L-glutamate + ATP = L-glutamyl-tRNA(Glu) + AMP + diphosphate. Its function is as follows. Catalyzes the attachment of glutamate to tRNA(Glu) in a two-step reaction: glutamate is first activated by ATP to form Glu-AMP and then transferred to the acceptor end of tRNA(Glu). This is Glutamate--tRNA ligase from Clostridium acetobutylicum (strain ATCC 824 / DSM 792 / JCM 1419 / IAM 19013 / LMG 5710 / NBRC 13948 / NRRL B-527 / VKM B-1787 / 2291 / W).